Here is a 305-residue protein sequence, read N- to C-terminus: Peroxisome biogenesis factor 2 (305 aa).

At 1–15 the chain is on the peroxisomal matrix side; the sequence is MAAREESTQSANRVL. A helical transmembrane segment spans residues 16–42; it reads RISQLDALELNKALEQLVWSQFTQCFH. Over 43 to 48 the chain is Cytoplasmic; it reads GFKPGL. A helical membrane pass occupies residues 49–74; the sequence is LARFEPEVKAFLWLFLWRFTIYSKNA. Residues 75–98 are Peroxisomal matrix-facing; the sequence is TVGQSVLNIQHKNDSSPNPVYQPP. Residues 99 to 125 traverse the membrane as a helical segment; it reads SKNQKLLYAVCTIGGRWLEERCYDLFR. Residues 126–133 lie on the Cytoplasmic side of the membrane; sequence NRHLASFG. A helical membrane pass occupies residues 134–160; sequence KAKQCMNFVVGLLKLGELMNFLIFLQK. Over 161-187 the chain is Peroxisomal matrix; the sequence is GKFATLTERLLGIHSVFCKPQNMREVG. A helical transmembrane segment spans residues 188–211; the sequence is FEYMNRELLWHGFAEFLIFLLPLI. Over 212-305 the chain is Cytoplasmic; that stretch reads NIQKLKAKLS…GIQMSEVNAL (94 aa). Positions 244, 247, 259, 261, 264, 267, 280, and 283 each coordinate Zn(2+). The RING-type zinc finger occupies 244–284; sequence CALCGEWPTMPHTIGCEHVFCYYCVKSSFLFDIYFTCPKCG.

The protein belongs to the pex2/pex10/pex12 family. In terms of assembly, component of the PEX2-PEX10-PEX12 retrotranslocation channel, composed of PEX2, PEX10 and PEX12. Forms intramolecular and intermolecular disulfide bonds in response to reactive oxygen species (ROS), promoting higher stability.

Its subcellular location is the peroxisome membrane. It catalyses the reaction [E2 ubiquitin-conjugating enzyme]-S-ubiquitinyl-L-cysteine + [acceptor protein]-L-cysteine = [E2 ubiquitin-conjugating enzyme]-L-cysteine + [acceptor protein]-S-ubiquitinyl-L-cysteine.. The catalysed reaction is S-ubiquitinyl-[E2 ubiquitin-conjugating enzyme]-L-cysteine + [acceptor protein]-L-lysine = [E2 ubiquitin-conjugating enzyme]-L-cysteine + N(6)-ubiquitinyl-[acceptor protein]-L-lysine.. It participates in protein modification; protein ubiquitination. Functionally, E3 ubiquitin-protein ligase component of a retrotranslocation channel required for peroxisome organization by mediating export of the PEX5 receptor from peroxisomes to the cytosol, thereby promoting PEX5 recycling. The retrotranslocation channel is composed of PEX2, PEX10 and PEX12; each subunit contributing transmembrane segments that coassemble into an open channel that specifically allows the passage of PEX5 through the peroxisomal membrane. PEX2 also regulates peroxisome organization by acting as a E3 ubiquitin-protein ligase. PEX2 ubiquitinates PEX5 during its passage through the retrotranslocation channel: catalyzes monoubiquitination of PEX5 at 'Cys-11', a modification that acts as a signal for PEX5 extraction into the cytosol. Required for pexophagy in response to starvation by mediating ubiquitination of peroxisomal proteins, such as PEX5 and ABCD3/PMP70. Also involved in the response to reactive oxygen species (ROS) by mediating 'Lys-48'-linked polyubiquitination and subsequent degradation of PNPLA2/ATGL, thereby regulating lipolysis. This is Peroxisome biogenesis factor 2 from Mus musculus (Mouse).